We begin with the raw amino-acid sequence, 282 residues long: Succinate dehydrogenase [ubiquinone] iron-sulfur subunit, mitochondrial (282 aa).

The N-terminal 21 residues, 1–21, are a transit peptide targeting the mitochondrion; it reads MLRGSTSVCRSLELVTQAARY. A 2Fe-2S ferredoxin-type domain is found at 39 to 129; the sequence is EIYRFNPEEP…TTKIYPLPHM (91 aa). [2Fe-2S] cluster is bound by residues cysteine 89, cysteine 94, cysteine 97, and cysteine 109. Residues 172 to 202 enclose the 4Fe-4S ferredoxin-type domain; it reads EQEKLDGLYECILCACCSASCPSYWWNADKY. [4Fe-4S] cluster-binding residues include cysteine 182, cysteine 185, and cysteine 188. Cysteine 192 is a [3Fe-4S] cluster binding site. Position 197 (tryptophan 197) interacts with a rhodoquinol. Position 197 (tryptophan 197) interacts with a ubiquinone. Residues cysteine 239 and cysteine 245 each coordinate [3Fe-4S] cluster. Cysteine 249 contacts [4Fe-4S] cluster.

The protein belongs to the succinate dehydrogenase/fumarate reductase iron-sulfur protein family. Component of the mitochondrial electron transport chain complex II composed of four subunits: a flavoprotein (Fp), an iron-sulfur protein (Ip), and a large cytochrome b (CybL) subunit and a small cytochrome b (CybS) subunit. There are 2 developmental stage-specific forms of complex II which have the Ip and CybL subunits in common. Complex II from the free-living larvae (aerobic environment) acts as a succinate dehydrogenase and is composed of the common subunit Ip and CybL and the stage specific subunits FpL and CybSL. Complex II from parasitic larvae and adults (anaerobic environment) acts as a fumarate reductase and is composed of the common subunit Ip and CybL and the stage specific subunits FpA and CybSA. [2Fe-2S] cluster is required as a cofactor. It depends on [3Fe-4S] cluster as a cofactor. Requires [4Fe-4S] cluster as cofactor. As to expression, expressed in adult muscles (at protein level).

The protein localises to the mitochondrion inner membrane. It catalyses the reaction a ubiquinone + succinate = a ubiquinol + fumarate. It carries out the reaction a rhodoquinone + succinate = a rhodoquinol + fumarate. It participates in carbohydrate metabolism; tricarboxylic acid cycle; fumarate from succinate (eukaryal route): step 1/1. With respect to regulation, inhibited by the fungicide flutolanil. In terms of biological role, iron-sulfur protein (Ip) subunit of the mitochondrial electron transport chain complex II which, together with the flavoprotein (Fp) subunit forms the catalytic core of the complex. During the free-living egg-larvae stages, which occur in an aerobic environment, complex II acts as a succinate dehydrogenase by transferring electrons from succinate to ubiquinone. During the parasitic larvae and adult stages, which occur in an anaerobic environment, complex II acts as a fumarate reductase by transferring electrons from rhodoquinol to fumarate. The protein is Succinate dehydrogenase [ubiquinone] iron-sulfur subunit, mitochondrial of Ascaris suum (Pig roundworm).